Consider the following 331-residue polypeptide: Beta-ketoacyl-[acyl-carrier-protein] synthase III (331 aa).

Catalysis depends on residues C113 and H256. Residues Q257 to R261 form an ACP-binding region. N286 is an active-site residue.

This sequence belongs to the thiolase-like superfamily. FabH family. As to quaternary structure, homodimer.

Its subcellular location is the cytoplasm. The catalysed reaction is malonyl-[ACP] + acetyl-CoA + H(+) = 3-oxobutanoyl-[ACP] + CO2 + CoA. It participates in lipid metabolism; fatty acid biosynthesis. In terms of biological role, catalyzes the condensation reaction of fatty acid synthesis by the addition to an acyl acceptor of two carbons from malonyl-ACP. Catalyzes the first condensation reaction which initiates fatty acid synthesis and may therefore play a role in governing the total rate of fatty acid production. Possesses both acetoacetyl-ACP synthase and acetyl transacylase activities. Its substrate specificity determines the biosynthesis of branched-chain and/or straight-chain of fatty acids. This Solibacter usitatus (strain Ellin6076) protein is Beta-ketoacyl-[acyl-carrier-protein] synthase III.